The primary structure comprises 115 residues: Viral Lymphotactin (115 aa).

An N-terminal signal peptide occupies residues 1–19 (MRLLTILALCCVAIWVVES). Cys-30 and Cys-67 form a disulfide bridge.

Belongs to the intercrine gamma family. Interacts with host XCR1. N-glycosylated and O-glycosylated.

It localises to the secreted. Chemoattractant for CD4-dendritic cells, but not for CD4+ dendritic cells, T-cells or B-cells. This is Viral Lymphotactin (vXCL1) from Rat cytomegalovirus (isolate England) (RCMV-E).